Consider the following 184-residue polypeptide: Dual specificity protein phosphatase 22 (184 aa).

The N-myristoyl glycine moiety is linked to residue glycine 2. Residues 4–144 enclose the Tyrosine-protein phosphatase domain; it reads GMSQILPGLY…LQEFEKHEVH (141 aa). The Phosphocysteine intermediate role is filled by cysteine 88. Residues leucine 89, alanine 90, valine 92, serine 93, and arginine 94 each coordinate a protein.

This sequence belongs to the protein-tyrosine phosphatase family. Non-receptor class dual specificity subfamily. As to quaternary structure, monomer. Interacts with LCK; the interaction is direct. Interacts with UBR2; the interaction is direct. Myristoylation regulates subcellular location, and is necessary for activation of JNK.

Its subcellular location is the cytoplasm. It catalyses the reaction O-phospho-L-tyrosyl-[protein] + H2O = L-tyrosyl-[protein] + phosphate. The enzyme catalyses O-phospho-L-seryl-[protein] + H2O = L-seryl-[protein] + phosphate. It carries out the reaction O-phospho-L-threonyl-[protein] + H2O = L-threonyl-[protein] + phosphate. Dual specificity phosphatase; can dephosphorylate both phosphotyrosine and phosphoserine or phosphothreonine residues. Activates the JNK signaling pathway. Inhibits T-cell receptor signaling and T-cell mediated immune responses, acting, at least in part, by inducing degradation of E3 ubiquitin ligase UBR2. Dephosphorylates and thereby induces 'Lys-48'-linked ubiquitination of UBR2, leading to proteasomal degradation of UBR2. Dephosphorylates and thereby inactivates tyrosine kinase LCK. Inhibits UBR2-mediated 'Lys-63'-linked ubiquitination of LCK. May play a role in B-cell receptor (BCR) signaling and B-cell function. In Mus musculus (Mouse), this protein is Dual specificity protein phosphatase 22 (Dusp22).